The following is a 360-amino-acid chain: NAD(P)H-quinone oxidoreductase subunit 1, chloroplastic (360 aa).

The next 8 helical transmembrane spans lie at isoleucine 27–isoleucine 47, phenylalanine 98–phenylalanine 118, isoleucine 129–glycine 149, alanine 165–leucine 185, phenylalanine 203–leucine 223, phenylalanine 253–valine 273, isoleucine 297–isoleucine 317, and phenylalanine 340–leucine 360.

The protein belongs to the complex I subunit 1 family. As to quaternary structure, NDH is composed of at least 16 different subunits, 5 of which are encoded in the nucleus.

It is found in the plastid. Its subcellular location is the chloroplast thylakoid membrane. It catalyses the reaction a plastoquinone + NADH + (n+1) H(+)(in) = a plastoquinol + NAD(+) + n H(+)(out). The catalysed reaction is a plastoquinone + NADPH + (n+1) H(+)(in) = a plastoquinol + NADP(+) + n H(+)(out). NDH shuttles electrons from NAD(P)H:plastoquinone, via FMN and iron-sulfur (Fe-S) centers, to quinones in the photosynthetic chain and possibly in a chloroplast respiratory chain. The immediate electron acceptor for the enzyme in this species is believed to be plastoquinone. Couples the redox reaction to proton translocation, and thus conserves the redox energy in a proton gradient. The chain is NAD(P)H-quinone oxidoreductase subunit 1, chloroplastic from Lobularia maritima (Sweet alyssum).